We begin with the raw amino-acid sequence, 584 residues long: Interferon regulatory factor 2-binding protein 1 (584 aa).

The interval H59 to R120 is disordered. S66 is modified (phosphoserine). Positions S82 to S100 are enriched in low complexity. S125 is subject to Phosphoserine. The residue at position 177 (R177) is an Omega-N-methylarginine. Residue S186 is modified to Phosphoserine. The stretch at E197 to G217 forms a coiled coil. Residue K227 forms a Glycyl lysine isopeptide (Lys-Gly) (interchain with G-Cter in SUMO2) linkage. 2 disordered regions span residues P346–S421 and L433–A495. The span at Y354 to A369 shows a compositional bias: pro residues. Residues S371, S384, S421, and S436 each carry the phosphoserine modification. A Glycyl lysine isopeptide (Lys-Gly) (interchain with G-Cter in SUMO2) cross-link involves residue K438. Residues A449–S458 show a composition bias toward low complexity. S453 and S457 each carry phosphoserine. An RING-type; degenerate zinc finger spans residues C503–D550. Residues C503–D550 form a cys-rich region.

Belongs to the IRF2BP family. Interacts with IRF2. Part of a corepressor complex containing IRF2 and IRF2BP2. Interacts with JDP2.

It localises to the nucleus. It carries out the reaction S-ubiquitinyl-[E2 ubiquitin-conjugating enzyme]-L-cysteine + [acceptor protein]-L-lysine = [E2 ubiquitin-conjugating enzyme]-L-cysteine + N(6)-ubiquitinyl-[acceptor protein]-L-lysine.. Functionally, acts as a transcriptional corepressor in a IRF2-dependent manner; this repression is not mediated by histone deacetylase activities. May act as an E3 ligase towards JDP2, enhancing its polyubiquitination. Represses ATF2-dependent transcriptional activation. The sequence is that of Interferon regulatory factor 2-binding protein 1 (Irf2bp1) from Mus musculus (Mouse).